We begin with the raw amino-acid sequence, 32 residues long: Photosystem II reaction center protein T (32 aa).

Residues 3-23 (SIAYVLIFACLIGLFFFAIFF) form a helical membrane-spanning segment.

It belongs to the PsbT family. In terms of assembly, PSII is composed of 1 copy each of membrane proteins PsbA, PsbB, PsbC, PsbD, PsbE, PsbF, PsbH, PsbI, PsbJ, PsbK, PsbL, PsbM, PsbT, PsbX, PsbY, PsbZ, Psb30/Ycf12, peripheral proteins PsbO, CyanoQ (PsbQ), PsbU, PsbV and a large number of cofactors. It forms dimeric complexes.

It is found in the cellular thylakoid membrane. In terms of biological role, found at the monomer-monomer interface of the photosystem II (PS II) dimer, plays a role in assembly and dimerization of PSII. PSII is a light-driven water plastoquinone oxidoreductase, using light energy to abstract electrons from H(2)O, generating a proton gradient subsequently used for ATP formation. This chain is Photosystem II reaction center protein T, found in Cyanothece sp. (strain PCC 7425 / ATCC 29141).